The chain runs to 254 residues: Phosphoribosylaminoimidazole-succinocarboxamide synthase (254 aa).

This sequence belongs to the SAICAR synthetase family.

The enzyme catalyses 5-amino-1-(5-phospho-D-ribosyl)imidazole-4-carboxylate + L-aspartate + ATP = (2S)-2-[5-amino-1-(5-phospho-beta-D-ribosyl)imidazole-4-carboxamido]succinate + ADP + phosphate + 2 H(+). It participates in purine metabolism; IMP biosynthesis via de novo pathway; 5-amino-1-(5-phospho-D-ribosyl)imidazole-4-carboxamide from 5-amino-1-(5-phospho-D-ribosyl)imidazole-4-carboxylate: step 1/2. This is Phosphoribosylaminoimidazole-succinocarboxamide synthase from Gluconobacter oxydans (strain 621H) (Gluconobacter suboxydans).